A 453-amino-acid polypeptide reads, in one-letter code: Probable exopolygalacturonase B (453 aa).

A signal peptide spans 1-16 (MKFFALAALFASTVNS). 2 N-linked (GlcNAc...) asparagine glycosylation sites follow: Asn-185 and Asn-225. Asp-255 serves as the catalytic Proton donor. Residues Cys-257 and Cys-274 are joined by a disulfide bond. N-linked (GlcNAc...) asparagine glycosylation is found at Asn-263 and Asn-275. His-278 is an active-site residue. PbH1 repeat units follow at residues 295–316 (IENV…RLKA) and 327–348 (INNV…VLDQ). N-linked (GlcNAc...) asparagine glycans are attached at residues Asn-302, Asn-329, Asn-354, and Asn-366. Residues 362–405 (PSRVNFTNIVFEDIYGTSSGKRGKVVADLTCSPNAVCSGIRLKN) form a PbH1 3 repeat. A disulfide bridge connects residues Cys-392 and Cys-398. The N-linked (GlcNAc...) asparagine glycan is linked to Asn-436.

This sequence belongs to the glycosyl hydrolase 28 family.

It localises to the secreted. It carries out the reaction [(1-&gt;4)-alpha-D-galacturonosyl](n) + H2O = alpha-D-galacturonate + [(1-&gt;4)-alpha-D-galacturonosyl](n-1). Specific in hydrolyzing the terminal glycosidic bond of polygalacturonic acid and oligogalacturonates. The sequence is that of Probable exopolygalacturonase B (pgxB) from Aspergillus fumigatus (strain CBS 144.89 / FGSC A1163 / CEA10) (Neosartorya fumigata).